The following is a 1046-amino-acid chain: Arrestin-related trafficking adapter 3 (1046 aa).

Residues 115–141 form a disordered region; sequence YPPTEQKSKKKMDASAPNESNNAANNF. A compositionally biased stretch (low complexity) spans 128 to 140; sequence ASAPNESNNAANN. Phosphoserine is present on residues serine 155 and serine 162. Low complexity-rich tracts occupy residues 168–179 and 198–210; these read SGLSSLNLSPLG and RSSS…GPSR. Residues 168–230 form a disordered region; sequence SGLSSLNLSP…ATSPSVSHHN (63 aa). Residues serine 213 and serine 586 each carry the phosphoserine modification. Positions 605-614 are enriched in polar residues; the sequence is TRNSRQFNRN. Disordered regions lie at residues 605-627 and 651-820; these read TRNS…IFNS and PLSP…FAHS. Residues 669 to 694 are compositionally biased toward low complexity; the sequence is FDFSSDFISDAASGTTTTEVSSSESS. Positions 734 to 785 are enriched in basic and acidic residues; sequence KNSDKNSSETLNKKESMSKIEENKHKRETTPKKRENRDVKSLSTPQREESKD. A compositionally biased stretch (low complexity) spans 802–811; that stretch reads LSLSSSLHSS. Serine 826 and serine 838 each carry phosphoserine. The interval 868-889 is disordered; that stretch reads NHDKNELNRHSTNTSSTPASAR. Over residues 877–889 the composition is skewed to polar residues; the sequence is HSTNTSSTPASAR. A Phosphoserine modification is found at serine 900. The tract at residues 986–1017 is disordered; that stretch reads QNSAESDHNNDIFTQGSGLTESSKNSDSEERF. Positions 996–1008 are enriched in polar residues; the sequence is DIFTQGSGLTESS. Phosphoserine occurs at positions 1022 and 1023.

This sequence belongs to the ALY1 family. In terms of assembly, interacts with PCL6, PCL7 and RSP5. Post-translationally, ubiquitinated by RSP5. Phosphorylated by the cyclin-CDKs PCL6-PHO85 and PCL7-PHO85.

Its subcellular location is the cytoplasm. Functionally, may regulate endocytosis by recruiting RSP5 ubiquitin ligase activity to specific plasma membrane proteins in response to extracellular stimuli. The sequence is that of Arrestin-related trafficking adapter 3 (ALY2) from Saccharomyces cerevisiae (strain ATCC 204508 / S288c) (Baker's yeast).